A 1491-amino-acid chain; its full sequence is Chromosome partition protein MukB (1491 aa).

ATP is bound at residue 34 to 41 (GGNGAGKS). Coiled coils occupy residues 302 to 418 (LIEQ…QYQQ), 488 to 600 (EVAR…RFES), 638 to 666 (ELEK…RLAS), 781 to 806 (RAAR…AKAS), 836 to 1109 (EQAL…DLRT), and 1210 to 1239 (VEAI…ISSD). The segment at 667 to 784 (PGGSNDPRLK…AIPLFGRAAR (118 aa)) is flexible hinge. Residues 1059–1080 (QRRRDELQERLHTSRSRKSEYE) form a disordered region.

It belongs to the SMC family. MukB subfamily. In terms of assembly, homodimerization via its hinge domain. Binds to DNA via its C-terminal region. Interacts, and probably forms a ternary complex, with MukE and MukF via its C-terminal region. The complex formation is stimulated by calcium or magnesium. Interacts with tubulin-related protein FtsZ.

It is found in the cytoplasm. The protein resides in the nucleoid. Functionally, plays a central role in chromosome condensation, segregation and cell cycle progression. Functions as a homodimer, which is essential for chromosome partition. Involved in negative DNA supercoiling in vivo, and by this means organize and compact chromosomes. May achieve or facilitate chromosome segregation by condensation DNA from both sides of a centrally located replisome during cell division. The polypeptide is Chromosome partition protein MukB (Vibrio cholerae serotype O1 (strain ATCC 39541 / Classical Ogawa 395 / O395)).